We begin with the raw amino-acid sequence, 210 residues long: Keratin-associated protein 4-9 (210 aa).

28 consecutive repeat copies span residues 24–28 (CCRPS), 29–33 (CCETT), 34–38 (CCRTT), 39–43 (CCRPS), 44–48 (CCVSS), 49–53 (CCRPQ), 54–58 (CCQSV), 59–63 (CCQPT), 69–73 (CCQTT), 74–78 (CCRTT), 84–88 (CCVSS), 89–93 (CCRPQ), 94–98 (CCQPA), 99–103 (CCQPT), 104–108 (CCRPS), 109–113 (CCETT), 114–118 (CCHPR), 119–123 (CCISS), 124–128 (CCRPS), 129–133 (CCVSS), 134–138 (CCKPQ), 139–143 (CCQSV), 144–148 (CCQPN), 149–153 (CCRPS), 159–163 (CCRPS), 164–168 (CCESS), 169–173 (CCRPC), and 174–178 (CCVRP). The tract at residues 24–178 (CCRPSCCETT…CCRPCCCVRP (155 aa)) is 29 X 5 AA repeats of C-C-[RQVHIEK]-[SPTR]-[VSTQCRNP].

Belongs to the KRTAP type 4 family. As to quaternary structure, interacts with hair keratins. As to expression, expressed in the hair follicles.

Its function is as follows. In the hair cortex, hair keratin intermediate filaments are embedded in an interfilamentous matrix, consisting of hair keratin-associated proteins (KRTAP), which are essential for the formation of a rigid and resistant hair shaft through their extensive disulfide bond cross-linking with abundant cysteine residues of hair keratins. The matrix proteins include the high-sulfur and high-glycine-tyrosine keratins. In Homo sapiens (Human), this protein is Keratin-associated protein 4-9 (KRTAP4-9).